Consider the following 476-residue polypeptide: MGIKFLEVIKPFCAVLPEIQKPERKIQFREKVLWTAITLFIFLVCCQIPLFGIMSSDSADPFYWMRVILASNRGTLMELGISPIVTSDLIMQLLAGAKIIEVGDSPKDRALFNGAQKLFGMIITIGQAIVYVMTGMYGDPSEMGAGICLVIIIQLFVAGLIVLLLDELLQKGYGLGSGISLLIATNICETIVWKAFSPTTVNTGRGTEFEGAIIALFHLLATRTDKVRALREAFYRQNLPNLMNLIATVFVFAVVIYFQGFRVDLPIKSARYRGQYNTYPIKLFYTSNIPIILQSALVSNLYVISQMLSTRFSGNFIVNLLGTWSDTSTGGPARAYPVGGLCYFLSPPESFGSVLDDPVHAAIYIVFMLGSCAFFSKTWIEVSGSSAKDVAKQLKEQQMVMRGHRETSMVHELNRYIPTAAAFGGLCIGGLSVMADFLGAIGSGTGILLAVTIIYQYFEIFVKEQSEMGSMGGLFF.

Topologically, residues 2 to 33 (GIKFLEVIKPFCAVLPEIQKPERKIQFREKVL) are cytoplasmic. Residues 34–53 (WTAITLFIFLVCCQIPLFGI) form a helical membrane-spanning segment. Topologically, residues 54–76 (MSSDSADPFYWMRVILASNRGTL) are lumenal. Residues 77–96 (MELGISPIVTSDLIMQLLAG) form a helical membrane-spanning segment. The Cytoplasmic portion of the chain corresponds to 97–117 (AKIIEVGDSPKDRALFNGAQK). The chain crosses the membrane as a helical span at residues 118–138 (LFGMIITIGQAIVYVMTGMYG). Over 139-144 (DPSEMG) the chain is Lumenal. A helical membrane pass occupies residues 145–165 (AGICLVIIIQLFVAGLIVLLL). Topologically, residues 166-172 (DELLQKG) are cytoplasmic. The chain crosses the membrane as a helical span at residues 173 to 193 (YGLGSGISLLIATNICETIVW). The Lumenal segment spans residues 194–240 (KAFSPTTVNTGRGTEFEGAIIALFHLLATRTDKVRALREAFYRQNLP). A helical transmembrane segment spans residues 241–261 (NLMNLIATVFVFAVVIYFQGF). Over 262-288 (RVDLPIKSARYRGQYNTYPIKLFYTSN) the chain is Cytoplasmic. A helical transmembrane segment spans residues 289–309 (IPIILQSALVSNLYVISQMLS). Over 310–354 (TRFSGNFIVNLLGTWSDTSTGGPARAYPVGGLCYFLSPPESFGSV) the chain is Lumenal. A helical membrane pass occupies residues 355-375 (LDDPVHAAIYIVFMLGSCAFF). Over 376-420 (SKTWIEVSGSSAKDVAKQLKEQQMVMRGHRETSMVHELNRYIPTA) the chain is Cytoplasmic. A helical transmembrane segment spans residues 421 to 441 (AAFGGLCIGGLSVMADFLGAI). Topologically, residues 442-445 (GSGT) are lumenal. A helical membrane pass occupies residues 446-462 (GILLAVTIIYQYFEIFV). Over 463–476 (KEQSEMGSMGGLFF) the chain is Cytoplasmic.

This sequence belongs to the SecY/SEC61-alpha family. In terms of assembly, the SEC61 channel-forming translocon complex consists of channel-forming core components SEC61A1, SEC61B and SEC61G and different auxiliary components such as SEC62 and SEC63. The SEC61 channel associates with the multi-pass translocon (MPT) complex.

The protein localises to the endoplasmic reticulum membrane. In terms of biological role, component of SEC61 channel-forming translocon complex that mediates transport of signal peptide-containing precursor polypeptides across the endoplasmic reticulum (ER). Forms a ribosome receptor and a gated pore in the ER membrane, both functions required for cotranslational translocation of nascent polypeptides. May cooperate with auxiliary protein SEC62, SEC63 and HSPA5/BiP to enable post-translational transport of small presecretory proteins. The SEC61 channel is also involved in ER membrane insertion of transmembrane proteins: it mediates membrane insertion of the first few transmembrane segments of proteins, while insertion of subsequent transmembrane regions of multi-pass membrane proteins is mediated by the multi-pass translocon (MPT) complex. The chain is Protein transport protein Sec61 subunit alpha (sec61a) from Boreogadus saida (Polar cod).